The chain runs to 1765 residues: MGAMDDRRYSYPPPRTSYVQPSTHPSPTASDYRYRSPVLPQHPPTHHSPSSYSASLYGQPKEDPAIAYARMREEMRTAEEARREAEALEYRRKRDMEFAARRPGSELMDDPRRIPHSSFPRSQMYGPSADQSRVMPSRNGKDYISEPPSPSELYPTDEDTERLPIDRYRRDIDVPPLPRQLPPPPSEIGRMADRARSPSAPIAPPLLKVVRKRTKVIRPNDFLVGNEDVWEDGLIRYQSKREDEVRAIAQWAASCQVRNGVGEPSLPQTQDESIKVRKINGDIATPTNKKKRKSRKLNLDDELLGLASSPPGSPNAAAEAEKSESKHHIYGMNGPIDPANPPSPSTIVYPSGLTRAEVIAKCEAGDVEGLTEDDVKAVQDEMWMREKAAQAAENGGVLPTNKDGTVRRKPGPAKGWRKIRGIDKKKETTPGKAQSTTAGSVAGSVADEEAEADIAALLDDSIAKKGKKVKRRKLEEPGAESPRFADAEDEYNEHRPSDSVLLDEIEDEHSRAGSVGESNALDTLPAASAPPKKKNSKTKEPGVGKGRWTRPTKPEKELVKKAEALASRTSKASLAGPSDDTFGVGPGPAEEVQEEIKHEYAPNTHDPRGVSENEAKIRHELVEDLQKQAWSNIVRDVPRIYRVFQGYDQSMKQIAQRRAQACVRNAFGQRNQKTMQRQSGKVNKEGAAKAKRIVKELAAFWRKNEKDEVIARKKAEREALERAKAEEEARETKRQSRKLNFLLTQTELYSHFIGKKIKTKEAEAAEGMDVEEEEKRGMEEIAIGEDGEPLPDLDYDEDDEENLRKHAARGAQAAIQAARDKARAFDDSIVGRGAPLPGDDTMDGDELNFQNPSLGENSVTITQPKMLMAQLKEYQLKGLTWLGNLYEQGINGILADEMGLGKTIQSISLLAYLAEHHNLWGPFLVIAPASTLHNWQQELARFVPRLKALPYWGSPKDRETLRKIWSRKNQTFSEDSPFHILITSYQLAVQDEKYLQGMKWQYMILDEAQAIKSSSSARWKSLLSLHCRNRLLLTGTPIQNSMHELWALLHFIMPQLFDSHEEFAEWFSKDIESSSGGVTGNLKPEQLKRLHMILKPFMLRRVKKHVQKELGDKIEIDLLVDLSQRQREIYKALRQRVSITDLLATAENNTDNGNPKNMRSLVNLVMQFRKVCNHPDLFERADVVSPFVFGEFSQSGNLAREGDGMYLPDSARNAIEVQIPRILWTDGGKLDIPGEQSLAGSDTKILQNLLNIWTPEWINERTKCADAEFGFVKLVGSSPGETSRSAKSPVLVQLLEGAEKERRWTEEGRFVDDSEFAASVKKGFRVPSVIPVLTQPGQVSLREISRRVWDESYLSRDDARCIGDYAIAPIVKPIASNRSFLNAQDRILNQPLAHSTLYGLAPSELHDPLAAEQFSRIAPSVPLTGLIPSSASSQTPVSPLHIPPTKRLIVDSAKLARLDSLLRELKAGGHRVLLYFQMTKMMDLIEEYLIFRQYKYLRLDGSSPIAERRDMVTSWQTNPDIFVFCLSTRAGGLGINLTAADTVIFYDHDWNPSSDAQAMDRAHRVGQTKQVTVYRLVARGTIEERILQMARGKKDIQDVVVGTKSVSDVAKPSEIVSLFMDDEELAESVAKRKQAEAHGYIAPTIIPNGRRSQFGDGLVLDDGEGDDGFFNAAAAARANAEEEEGLGAEEESKGKGKAKAAAAVTFPVPGEKRSHKKGMGKKAQAAAAAAALERVIAGNEEPLAASKPPAKKKVKIALGPDGLPL.

5 disordered regions span residues 1 to 66 (MGAM…DPAI), 101 to 200 (RRPG…SPSA), 303 to 342 (LLGL…ANPP), 390 to 446 (QAAE…GSVA), and 458 to 588 (LDDS…GPGP). The span at 17–29 (SYVQPSTHPSPTA) shows a compositional bias: polar residues. Basic and acidic residues-rich tracts occupy residues 101 to 113 (RRPG…DPRR) and 161 to 173 (ERLP…RDID). Residues 175 to 186 (PPLPRQLPPPPS) show a composition bias toward pro residues. The span at 304 to 318 (LGLASSPPGSPNAAA) shows a compositional bias: low complexity. Over residues 407-419 (RRKPGPAKGWRKI) the composition is skewed to basic residues. 2 stretches are compositionally biased toward basic and acidic residues: residues 420–429 (RGIDKKKETT) and 552–563 (TKPEKELVKKAE). The DBINO domain occupies 629–759 (AWSNIVRDVP…SHFIGKKIKT (131 aa)). A coiled-coil region spans residues 702-745 (RKNEKDEVIARKKAEREALERAKAEEEARETKRQSRKLNFLLTQ). In terms of domain architecture, Helicase ATP-binding spans 883-1055 (GNLYEQGING…WALLHFIMPQ (173 aa)). Residue 896–903 (DEMGLGKT) coordinates ATP. The DEAQ box motif lies at 1006 to 1009 (DEAQ). Positions 1457–1607 (RLDSLLRELK…DVVVGTKSVS (151 aa)) constitute a Helicase C-terminal domain. 2 disordered regions span residues 1680–1700 (AEEE…KAKA) and 1740–1765 (EEPL…GLPL).

The protein belongs to the SNF2/RAD54 helicase family. In terms of assembly, component of the INO80 chromatin-remodeling complex.

Its subcellular location is the nucleus. It catalyses the reaction ATP + H2O = ADP + phosphate + H(+). Its function is as follows. ATPase component of the INO80 complex which remodels chromatin by shifting nucleosomes and is involved in DNA repair. The polypeptide is Chromatin-remodeling ATPase INO80 (INO80) (Cryptococcus neoformans var. neoformans serotype D (strain B-3501A) (Filobasidiella neoformans)).